The primary structure comprises 633 residues: Telomere-binding protein 1 (633 aa).

Positions His253–Ser272 are disordered. Residues Ser263 to Ser272 show a composition bias toward polar residues. One can recognise a Ubiquitin-like domain in the interval Val351–Cys430. The interval Pro506–Ser615 is sufficient for telomeric DNA binding. Residues Gly529–Ser588 enclose the HTH myb-type domain. The SANT domain occupies Arg534 to Val584. Positions Trp557–Val584 form a DNA-binding region, H-T-H motif.

In terms of assembly, homodimer. In terms of tissue distribution, ubiquitous.

The protein resides in the chromosome. The protein localises to the telomere. Binds the telomeric double-stranded 5'TTTAGGG-3' repeat and regulates telomere length and structure. This Oryza sativa subsp. japonica (Rice) protein is Telomere-binding protein 1 (TBP1).